The sequence spans 247 residues: Coproheme decarboxylase (247 aa).

Residues Arg-129, 143–147 (YPMDK), His-170, Gln-183, and Ser-221 contribute to the Fe-coproporphyrin III site. Residue Tyr-143 is part of the active site.

This sequence belongs to the ChdC family. Type 1 subfamily. Requires Fe-coproporphyrin III as cofactor.

The enzyme catalyses Fe-coproporphyrin III + 2 H2O2 + 2 H(+) = heme b + 2 CO2 + 4 H2O. The catalysed reaction is Fe-coproporphyrin III + H2O2 + H(+) = harderoheme III + CO2 + 2 H2O. It catalyses the reaction harderoheme III + H2O2 + H(+) = heme b + CO2 + 2 H2O. It participates in porphyrin-containing compound metabolism; protoheme biosynthesis. Involved in coproporphyrin-dependent heme b biosynthesis. Catalyzes the decarboxylation of Fe-coproporphyrin III (coproheme) to heme b (protoheme IX), the last step of the pathway. The reaction occurs in a stepwise manner with a three-propionate intermediate. The sequence is that of Coproheme decarboxylase from Bacillus anthracis.